Here is a 137-residue protein sequence, read N- to C-terminus: Ribosome-binding factor A (137 aa).

It belongs to the RbfA family. In terms of assembly, monomer. Binds 30S ribosomal subunits, but not 50S ribosomal subunits or 70S ribosomes.

The protein resides in the cytoplasm. In terms of biological role, one of several proteins that assist in the late maturation steps of the functional core of the 30S ribosomal subunit. Associates with free 30S ribosomal subunits (but not with 30S subunits that are part of 70S ribosomes or polysomes). Required for efficient processing of 16S rRNA. May interact with the 5'-terminal helix region of 16S rRNA. The chain is Ribosome-binding factor A from Rhodopseudomonas palustris (strain BisB18).